The chain runs to 240 residues: Ubiquinone biosynthesis O-methyltransferase (240 aa).

S-adenosyl-L-methionine is bound by residues Arg36, Gly66, Asp87, and Met129.

The protein belongs to the methyltransferase superfamily. UbiG/COQ3 family.

It catalyses the reaction a 3-demethylubiquinol + S-adenosyl-L-methionine = a ubiquinol + S-adenosyl-L-homocysteine + H(+). It carries out the reaction a 3-(all-trans-polyprenyl)benzene-1,2-diol + S-adenosyl-L-methionine = a 2-methoxy-6-(all-trans-polyprenyl)phenol + S-adenosyl-L-homocysteine + H(+). It functions in the pathway cofactor biosynthesis; ubiquinone biosynthesis. Functionally, O-methyltransferase that catalyzes the 2 O-methylation steps in the ubiquinone biosynthetic pathway. This chain is Ubiquinone biosynthesis O-methyltransferase, found in Pelagibacter ubique (strain HTCC1062).